Consider the following 693-residue polypeptide: TBC1 domain family member 14 (693 aa).

Ser91 bears the Phosphoserine mark. 2 disordered regions span residues 108–130 (PSCA…SSTF) and 271–304 (NAQK…RKNL). Residues 271 to 288 (NAQKDSKRIQKEYEDKAG) are compositionally biased toward basic and acidic residues. Ser295 is subject to Phosphoserine. The 211-residue stretch at 401-611 (GIPPSVRGKV…RIWDVFCRDG (211 aa)) folds into the Rab-GAP TBC domain.

As to quaternary structure, interacts with ULK1. May interact with RAB11A and RAB11B, but does not exhibit any GTPase-activating activity toward these proteins. Interacts with TRAPPC8.

It localises to the golgi apparatus. It is found in the cis-Golgi network. Its subcellular location is the trans-Golgi network. Plays a role in the regulation of starvation-induced autophagosome formation. Together with the TRAPPIII complex, regulates a constitutive trafficking step from peripheral recycling endosomes to the early Golgi, maintaining the cycling pool of ATG9 required for initiation of autophagy. This Homo sapiens (Human) protein is TBC1 domain family member 14 (TBC1D14).